The chain runs to 320 residues: MNSRRSPLLVFSGQSNRPLAQAICDNLGVPLGRSRTEKFTNDNLIVHYEESLREGDVFIVQTFSTPVSDAIMELMLMIDAAKSASAGRVTAVIPYYSYARSDKKDSPRISIAGRLVADLLQEAGADRVLTMTLHSPQVHGFFKVPVDHLSADVVLSQHFKKCVPDAHNGVVLAPDAGSIKRASQIARRLDSGLAMIDKERLSDTEVRPRALIGDVDGKTVFIVDDEISTAGSLVETVSIARSMGAKDVYVAVTHGVYSGPAIERIAALDVTQVASCNTVLVPQDKLDRAGGKLAVLDVAPLFASAIANIHTGASVSTLFT.

Residue 41-43 coordinates ATP; the sequence is NDN. Mg(2+) is bound by residues His-134 and Asp-175. Lys-198 is a catalytic residue. The D-ribose 5-phosphate site is built by Arg-200 and Asp-224.

This sequence belongs to the ribose-phosphate pyrophosphokinase family. Class I subfamily. As to quaternary structure, homohexamer. Mg(2+) is required as a cofactor.

The protein localises to the cytoplasm. The enzyme catalyses D-ribose 5-phosphate + ATP = 5-phospho-alpha-D-ribose 1-diphosphate + AMP + H(+). Its pathway is metabolic intermediate biosynthesis; 5-phospho-alpha-D-ribose 1-diphosphate biosynthesis; 5-phospho-alpha-D-ribose 1-diphosphate from D-ribose 5-phosphate (route I): step 1/1. Its function is as follows. Involved in the biosynthesis of the central metabolite phospho-alpha-D-ribosyl-1-pyrophosphate (PRPP) via the transfer of pyrophosphoryl group from ATP to 1-hydroxyl of ribose-5-phosphate (Rib-5-P). The chain is Ribose-phosphate pyrophosphokinase from Deinococcus radiodurans (strain ATCC 13939 / DSM 20539 / JCM 16871 / CCUG 27074 / LMG 4051 / NBRC 15346 / NCIMB 9279 / VKM B-1422 / R1).